The sequence spans 673 residues: Armadillo repeat-containing protein 8 (673 aa).

14 ARM repeats span residues 51 to 92 (NKQK…SLSM), 95 to 134 (ENNI…TVFI), 138 to 176 (TPVQ…HCCK), 178 to 217 (PEHQ…VLAY), 225 to 265 (TLVN…YMCR), 269 to 309 (IRTE…YLME), 313 to 352 (ELQR…HDLK), 374 to 413 (DIRK…SLSR), 416 to 455 (QQLR…NLLL), 458 to 497 (SPSK…NMAF), 501 to 540 (QKVK…NLLS), 543 to 585 (PHID…NIAD), 588 to 627 (TAKE…NLIW), and 634 to 673 (QERQ…QYLA).

Identified in the CTLH complex that contains at least MAEA, RMND5A (or alternatively its paralog RMND5B), GID8, WDR26, and RANBP9 and/or RANBP10; ARMC8 has an ancillary role in the complex.

Its subcellular location is the nucleus. The protein resides in the cytoplasm. Component of the CTLH E3 ubiquitin-protein ligase complex that mediates ubiquitination and subsequent proteasomal degradation of target proteins. The polypeptide is Armadillo repeat-containing protein 8 (armc8) (Danio rerio (Zebrafish)).